The primary structure comprises 58 residues: Sec-independent protein translocase protein TatA (58 aa).

Residues 1-21 (MLSNIGFPGLILILVAILILF) form a helical membrane-spanning segment.

The protein belongs to the TatA/E family. Forms a complex with TatC.

The protein resides in the cell membrane. Part of the twin-arginine translocation (Tat) system that transports large folded proteins containing a characteristic twin-arginine motif in their signal peptide across membranes. TatA could form the protein-conducting channel of the Tat system. The protein is Sec-independent protein translocase protein TatA of Bacillus cytotoxicus (strain DSM 22905 / CIP 110041 / 391-98 / NVH 391-98).